Reading from the N-terminus, the 238-residue chain is Ribonuclease PH (238 aa).

Phosphate is bound by residues Arg86 and 124 to 126 (GTR).

Belongs to the RNase PH family. As to quaternary structure, homohexameric ring arranged as a trimer of dimers.

The enzyme catalyses tRNA(n+1) + phosphate = tRNA(n) + a ribonucleoside 5'-diphosphate. Its function is as follows. Phosphorolytic 3'-5' exoribonuclease that plays an important role in tRNA 3'-end maturation. Removes nucleotide residues following the 3'-CCA terminus of tRNAs; can also add nucleotides to the ends of RNA molecules by using nucleoside diphosphates as substrates, but this may not be physiologically important. Probably plays a role in initiation of 16S rRNA degradation (leading to ribosome degradation) during starvation. This chain is Ribonuclease PH, found in Mannheimia haemolytica (Pasteurella haemolytica).